The chain runs to 277 residues: Caspase-3 (277 aa).

Position 1 is an N-acetylmethionine (Met1). 2 propeptides span residues 1–9 (MENTENSVD) and 10–28 (AKSF…KSMD). Lys11 is subject to N6-acetyllysine. The residue at position 26 (Ser26) is a Phosphoserine. Residues His121 and Cys163 contribute to the active site. S-nitrosocysteine; in inhibited form is present on Cys163.

Belongs to the peptidase C14A family. As to quaternary structure, heterotetramer that consists of two anti-parallel arranged heterodimers, each one formed by a 17 kDa (p17) and a 12 kDa (p12) subunit. Interacts with BIRC6/bruce. In terms of processing, cleavage by granzyme B, caspase-6, caspase-8 and caspase-10 generates the two active subunits. Additional processing of the propeptides is likely due to the autocatalytic activity of the activated protease. Active heterodimers between the small subunit of caspase-7 protease and the large subunit of caspase-3 also occur and vice versa. S-nitrosylated on its catalytic site cysteine in unstimulated cell lines and denitrosylated upon activation of the Fas apoptotic pathway, associated with an increase in intracellular caspase activity. Fas therefore activates caspase-3 not only by inducing the cleavage of the caspase zymogen to its active subunits, but also by stimulating the denitrosylation of its active site thiol. Post-translationally, ubiquitinated by BIRC6; this activity is inhibited by DIABLO/SMAC.

The protein localises to the cytoplasm. The catalysed reaction is Strict requirement for an Asp residue at positions P1 and P4. It has a preferred cleavage sequence of Asp-Xaa-Xaa-Asp-|- with a hydrophobic amino-acid residue at P2 and a hydrophilic amino-acid residue at P3, although Val or Ala are also accepted at this position.. With respect to regulation, inhibited by BIRC6; following inhibition of BIRC6-caspase binding by DIABLO/SMAC, BIRC6 is subjected to caspase cleavage, leading to an increase in active caspases. In terms of biological role, involved in the activation cascade of caspases responsible for apoptosis execution. At the onset of apoptosis, it proteolytically cleaves poly(ADP-ribose) polymerase PARP1 at a '216-Asp-|-Gly-217' bond. Cleaves and activates sterol regulatory element binding proteins (SREBPs) between the basic helix-loop-helix leucine zipper domain and the membrane attachment domain. Cleaves and activates caspase-6, -7 and -9 (CASP6, CASP7 and CASP9, respectively). Cleaves and inactivates interleukin-18 (IL18). Triggers cell adhesion in sympathetic neurons through RET cleavage. Cleaves IL-1 beta between an Asp and an Ala, releasing the mature cytokine which is involved in a variety of inflammatory processes. Cleaves and inhibits serine/threonine-protein kinase AKT1 in response to oxidative stress. Acts as an inhibitor of type I interferon production during virus-induced apoptosis by mediating cleavage of antiviral proteins CGAS, IRF3 and MAVS, thereby preventing cytokine overproduction. Also involved in pyroptosis by mediating cleavage and activation of gasdermin-E (GSDME). Cleaves XRCC4 and phospholipid scramblase proteins XKR4, XKR8 and XKR9, leading to promote phosphatidylserine exposure on apoptotic cell surface. Cleaves BIRC6 following inhibition of BIRC6-caspase binding by DIABLO/SMAC. The chain is Caspase-3 (CASP3) from Canis lupus familiaris (Dog).